The following is a 268-amino-acid chain: Protein CDV3 homolog (268 aa).

Residues 40–50 (KREVVKPKKPE) show a composition bias toward basic and acidic residues. 2 disordered regions span residues 40–145 (KREV…ERVG) and 184–268 (QQAG…DEAS). Residues 51–61 (AAAGGVAVVGE) are compositionally biased toward low complexity. Positions 76-85 (VEEEWKEFEE) are enriched in acidic residues. Residues 98 to 107 (QLSTITAQES) show a composition bias toward polar residues. Acidic residues predominate over residues 123 to 132 (NYDEDDEDSN). Positions 221 to 239 (RPEEQRKKKNEPAFEEVRH) are enriched in basic and acidic residues.

This sequence belongs to the CDV3 family.

This is Protein CDV3 homolog from Drosophila yakuba (Fruit fly).